A 525-amino-acid polypeptide reads, in one-letter code: Glutamyl-tRNA(Gln) amidotransferase subunit A, mitochondrial (525 aa).

Residues Lys76 and Ser168 each act as charge relay system in the active site. Residue Ser192 is the Acyl-ester intermediate of the active site.

The protein belongs to the amidase family. GatA subfamily. In terms of assembly, subunit of the heterotrimeric GatCAB amidotransferase (AdT) complex, composed of A (QRSL1), B (GATB) and C (GATC) subunits.

It localises to the mitochondrion. It carries out the reaction L-glutamyl-tRNA(Gln) + L-glutamine + ATP + H2O = L-glutaminyl-tRNA(Gln) + L-glutamate + ADP + phosphate + H(+). Functionally, allows the formation of correctly charged Gln-tRNA(Gln) through the transamidation of misacylated Glu-tRNA(Gln) in the mitochondria. The reaction takes place in the presence of glutamine and ATP through an activated gamma-phospho-Glu-tRNA(Gln). The chain is Glutamyl-tRNA(Gln) amidotransferase subunit A, mitochondrial (Qrsl1) from Mus musculus (Mouse).